Reading from the N-terminus, the 274-residue chain is Large ribosomal subunit protein uL2 (274 aa).

Positions 221-274 (RGTAMNPVDHPHGGGEGKNFGKHPVTPWGVQTKGKKTRSNKRTDKFIVRRRSKK) are disordered.

The protein belongs to the universal ribosomal protein uL2 family. In terms of assembly, part of the 50S ribosomal subunit. Forms a bridge to the 30S subunit in the 70S ribosome.

Its function is as follows. One of the primary rRNA binding proteins. Required for association of the 30S and 50S subunits to form the 70S ribosome, for tRNA binding and peptide bond formation. It has been suggested to have peptidyltransferase activity; this is somewhat controversial. Makes several contacts with the 16S rRNA in the 70S ribosome. The protein is Large ribosomal subunit protein uL2 of Serratia proteamaculans (strain 568).